A 78-amino-acid polypeptide reads, in one-letter code: Large ribosomal subunit protein bL28 (78 aa).

A disordered region spans residues 1–21 (MSRVCQVTGKKPMVGNNRSHA).

The protein belongs to the bacterial ribosomal protein bL28 family.

This Shewanella baltica (strain OS223) protein is Large ribosomal subunit protein bL28.